Here is a 113-residue protein sequence, read N- to C-terminus: METVEGIMVVTTETIPGYRIVEVKGIARGGIVKATHIGRDIMAVLRNIKGGEVREYTQMMAEAREEALRRMALHAKELGANAVVNVRFATSNVGSSVAEVYAYGTAVVVEKEE.

It belongs to the UPF0145 family.

In Thermococcus kodakarensis (strain ATCC BAA-918 / JCM 12380 / KOD1) (Pyrococcus kodakaraensis (strain KOD1)), this protein is UPF0145 protein TK1926.